The sequence spans 202 residues: Small ribosomal subunit protein uS4 (202 aa).

The S4 RNA-binding domain occupies 94-157 (SRLDSLVYRA…LEMPLIKNTL (64 aa)).

It belongs to the universal ribosomal protein uS4 family. As to quaternary structure, part of the 30S ribosomal subunit. Contacts protein S5. The interaction surface between S4 and S5 is involved in control of translational fidelity.

One of the primary rRNA binding proteins, it binds directly to 16S rRNA where it nucleates assembly of the body of the 30S subunit. Functionally, with S5 and S12 plays an important role in translational accuracy. The protein is Small ribosomal subunit protein uS4 of Ureaplasma urealyticum serovar 10 (strain ATCC 33699 / Western).